We begin with the raw amino-acid sequence, 195 residues long: MFDIGFSELVLIFIVGLVVLGPQRLPIAIKTVMGWIRTIRGLAANVQNELAQELKLQELQESIKKAEKLNLTTLSPELSKTVEELKQSAQKMQSDLDAAKGEITKLTDEQVANIQNNIAQEEQNLATVQPETLQKSEENQPLVDTANAEENPSLSPAEIAEQAELDESQFAAYYPPDDDLASPTPSQPQDKQNVS.

A helical transmembrane segment spans residues 1–21; that stretch reads MFDIGFSELVLIFIVGLVVLG. Positions 166–195 are disordered; that stretch reads DESQFAAYYPPDDDLASPTPSQPQDKQNVS. Over residues 183–195 the composition is skewed to polar residues; the sequence is PTPSQPQDKQNVS.

It belongs to the TatB family. The Tat system comprises two distinct complexes: a TatABC complex, containing multiple copies of TatA, TatB and TatC subunits, and a separate TatA complex, containing only TatA subunits. Substrates initially bind to the TatABC complex, which probably triggers association of the separate TatA complex to form the active translocon.

The protein localises to the cell inner membrane. Part of the twin-arginine translocation (Tat) system that transports large folded proteins containing a characteristic twin-arginine motif in their signal peptide across membranes. Together with TatC, TatB is part of a receptor directly interacting with Tat signal peptides. TatB may form an oligomeric binding site that transiently accommodates folded Tat precursor proteins before their translocation. The protein is Sec-independent protein translocase protein TatB of Actinobacillus pleuropneumoniae serotype 5b (strain L20).